Here is a 300-residue protein sequence, read N- to C-terminus: ADP-ribosyl cyclase/cyclic ADP-ribose hydrolase 1 (300 aa).

At 1–21 the chain is on the cytoplasmic side; sequence MANCEFSPVSGDKPCCRLSRR. Residues 22-42 traverse the membrane as a helical; Signal-anchor for type II membrane protein segment; the sequence is AQLCLGVSILVLILVVVLAVV. The Extracellular segment spans residues 43 to 300; the sequence is VPRWRQQWSG…PEDSSCTSEI (258 aa). 3 cysteine pairs are disulfide-bonded: cysteine 67–cysteine 82, cysteine 99–cysteine 180, and cysteine 160–cysteine 173. Asparagine 100 is a glycosylation site (N-linked (GlcNAc...) asparagine). Residue cysteine 119 is part of the active site. Asparagine 164 is a glycosylation site (N-linked (GlcNAc...) asparagine). Cysteine 201 is a catalytic residue. Residues asparagine 209 and asparagine 219 are each glycosylated (N-linked (GlcNAc...) asparagine). Disulfide bonds link cysteine 254–cysteine 275 and cysteine 287–cysteine 296.

Belongs to the ADP-ribosyl cyclase family. In terms of assembly, homodimer. As to expression, expressed at high levels in pancreas, liver, kidney, brain, testis, ovary, placenta, malignant lymphoma and neuroblastoma.

Its subcellular location is the cell surface. The protein resides in the membrane. It catalyses the reaction 2'-phospho-cyclic ADP-ribose + nicotinate = nicotinate-adenine dinucleotide phosphate. It carries out the reaction NAD(+) = cyclic ADP-beta-D-ribose + nicotinamide + H(+). The enzyme catalyses NAD(+) + H2O = ADP-D-ribose + nicotinamide + H(+). The catalysed reaction is cyclic ADP-beta-D-ribose + H2O = ADP-D-ribose. It catalyses the reaction NADP(+) = 2'-phospho-cyclic ADP-ribose + nicotinamide. It carries out the reaction nicotinate + NADP(+) = nicotinate-adenine dinucleotide phosphate + nicotinamide. Its activity is regulated as follows. ATP inhibits the cADPR hydrolyzing activity. In terms of biological role, synthesizes cyclic ADP-ribose (cADPR), a second messenger for glucose-induced insulin secretion. Synthesizes the Ca(2+) mobilizer nicotinate-adenine dinucleotide phosphate, NAADP(+), from 2'-phospho-cADPR and nicotinic acid, as well as from NADP(+) and nicotinic acid. At both pH 5.0 and pH 7.4 preferentially transforms 2'-phospho-cADPR into NAADP(+), while preferentially cleaving NADP(+) to cADPR and ADPRP rather than into NADDP(+). Has cADPR hydrolase activity. The polypeptide is ADP-ribosyl cyclase/cyclic ADP-ribose hydrolase 1 (CD38) (Homo sapiens (Human)).